The sequence spans 210 residues: Somatotropin (210 aa).

An N-terminal signal peptide occupies residues 1-22; it reads MGQVFLLMPVLLVSCFLSHGAA. Histidine 38 provides a ligand contact to Zn(2+). Cysteines 71 and 183 form a disulfide. Glutamate 192 lines the Zn(2+) pocket. A disulfide bridge connects residues cysteine 200 and cysteine 208.

It belongs to the somatotropin/prolactin family.

It localises to the secreted. In terms of biological role, growth hormone plays an important role in growth control and is involved in the regulation of several anabolic processes. Implicated as an osmoregulatory substance important for seawater adaptation. The chain is Somatotropin (gh) from Oncorhynchus masou (Cherry salmon).